The chain runs to 348 residues: MTAQPQALKIRRPDDWHIHLRDDDMLKTVLPYTSQVFGRAIVMPNLALPITTVAAACAYRDRILAAVPQGHDFTPLMTCYLTNSLDAAELVNGFEQGVFTAAKLYPANATTNSSHGVSDVKAIYPLFEQMQKIGMPLLIHGEVTDAAVDIFDREARFIEQVMEPIRQQFPELKIVFEHITTKEAAQYVQEGNRFLGATITPQHLMFNRNHMLVGGIRPHLFCLPILKRNIHQDALRKAVASGSDRFFLGTDSAPHAKHRKESSCGCAGVFNAPNAIPAYASVFEQLGALDHLEAFCSLNGPRFYGLPVNTDFIELQRVATTQPEEIAMGSETVIPFLAGESLSWSVKA.

Zn(2+)-binding residues include His-17 and His-19. Residues 19–21 and Asn-45 each bind substrate; that span reads HLR. The Zn(2+) site is built by Lys-103, His-140, and His-178. The residue at position 103 (Lys-103) is an N6-carboxylysine. His-140 contributes to the substrate binding site. A substrate-binding site is contributed by Leu-223. Asp-251 provides a ligand contact to Zn(2+). Asp-251 is an active-site residue. Substrate is bound by residues His-255 and Ala-267.

It belongs to the metallo-dependent hydrolases superfamily. DHOase family. Class II DHOase subfamily. In terms of assembly, homodimer. It depends on Zn(2+) as a cofactor.

It carries out the reaction (S)-dihydroorotate + H2O = N-carbamoyl-L-aspartate + H(+). The protein operates within pyrimidine metabolism; UMP biosynthesis via de novo pathway; (S)-dihydroorotate from bicarbonate: step 3/3. In terms of biological role, catalyzes the reversible cyclization of carbamoyl aspartate to dihydroorotate. The protein is Dihydroorotase of Serratia proteamaculans (strain 568).